The sequence spans 143 residues: Transcriptional regulator MraZ (143 aa).

SpoVT-AbrB domains follow at residues 5 to 47 (EYLH…PLDE) and 76 to 119 (ATEC…SQAL).

Belongs to the MraZ family. In terms of assembly, forms oligomers.

It localises to the cytoplasm. Its subcellular location is the nucleoid. In Desulfitobacterium hafniense (strain DSM 10664 / DCB-2), this protein is Transcriptional regulator MraZ.